The following is a 434-amino-acid chain: ATP-dependent protease ATPase subunit HslU (434 aa).

Residues I18, 60 to 65, D247, E312, and R384 contribute to the ATP site; that span reads GVGKTE.

It belongs to the ClpX chaperone family. HslU subfamily. In terms of assembly, a double ring-shaped homohexamer of HslV is capped on each side by a ring-shaped HslU homohexamer. The assembly of the HslU/HslV complex is dependent on binding of ATP.

It localises to the cytoplasm. Functionally, ATPase subunit of a proteasome-like degradation complex; this subunit has chaperone activity. The binding of ATP and its subsequent hydrolysis by HslU are essential for unfolding of protein substrates subsequently hydrolyzed by HslV. HslU recognizes the N-terminal part of its protein substrates and unfolds these before they are guided to HslV for hydrolysis. This is ATP-dependent protease ATPase subunit HslU from Brucella abortus (strain S19).